Here is a 523-residue protein sequence, read N- to C-terminus: 3-hydroxybenzoate--CoA ligase (523 aa).

It belongs to the ATP-dependent AMP-binding enzyme family. Benzoate-CoA ligase subfamily.

The catalysed reaction is 3-hydroxybenzoate + ATP + CoA = 3-hydroxybenzoyl-CoA + AMP + diphosphate. It carries out the reaction 4-hydroxybenzoate + ATP + CoA = 4-hydroxybenzoyl-CoA + AMP + diphosphate. In terms of biological role, ligase involved in the anaerobic degradation of 3-hydroxybenzoate (3OHBz). Catalyzes the activation of 3-hydroxybenzoate to 3-hydroxybenzoyl-CoA. Also shows high activity with protocatechuate and 4-hydroxybenzoate. Exhibits lower activity with benzoate, but cannot use 2-hydroxybenzoate or benzoate analogs containing other substituents at the ortho position, such as 2-aminobenzoate (anthranilate). This Aromatoleum sp. (strain CIB) (Azoarcus sp. (strain CIB)) protein is 3-hydroxybenzoate--CoA ligase.